The chain runs to 217 residues: Probable transaldolase (217 aa).

The Schiff-base intermediate with substrate role is filled by Lys83.

Belongs to the transaldolase family. Type 3B subfamily.

Its subcellular location is the cytoplasm. It carries out the reaction D-sedoheptulose 7-phosphate + D-glyceraldehyde 3-phosphate = D-erythrose 4-phosphate + beta-D-fructose 6-phosphate. It participates in carbohydrate degradation; pentose phosphate pathway; D-glyceraldehyde 3-phosphate and beta-D-fructose 6-phosphate from D-ribose 5-phosphate and D-xylulose 5-phosphate (non-oxidative stage): step 2/3. Its function is as follows. Transaldolase is important for the balance of metabolites in the pentose-phosphate pathway. This Pseudothermotoga lettingae (strain ATCC BAA-301 / DSM 14385 / NBRC 107922 / TMO) (Thermotoga lettingae) protein is Probable transaldolase.